A 959-amino-acid chain; its full sequence is Transcription factor 1 (959 aa).

2 C2H2-type zinc fingers span residues 2-24 (VFCTYCGHSFTRDEHLERHILTH) and 30-52 (FKCFTCHMSFARRDLLQGHYTVH). Positions 79–105 (CSNCAKTKTKCDKKFPCSRCASRNLRC) form a DNA-binding region, zn(2)-C6 fungal-type. A disordered region spans residues 154 to 226 (PTGHVEESSK…SFPGFDDYNQ (73 aa)). Positions 163–178 (KSSSPSGSPTSISHNS) are enriched in low complexity.

Its subcellular location is the nucleus. Its function is as follows. Elsinochromes biosynthesis cluster-specific transcription factor that positively regulates the expression of cluster genes including RDT1, PKS1, PRF1 and HP1, and subsequent elsinochromes production. This is Transcription factor 1 from Elsinoe fawcettii (Citrus scab fungus).